A 121-amino-acid chain; its full sequence is Immunoglobulin heavy variable 6-1 (121 aa).

The signal sequence occupies residues 1 to 20 (MSVSFLIFLPVLGLPWGVLS). The segment at 21-45 (QVQLQQSGPGLVKPSQTLSLTCAIS) is framework-1. One can recognise an Ig-like domain in the interval 21–121 (QVQLQQSGPG…EDTAVYYCAR (101 aa)). C42 and C119 are disulfide-bonded. Positions 46 to 55 (GDSVSSNSAA) are complementarity-determining-1. The tract at residues 56-72 (WNWIRQSPSRGLEWLGR) is framework-2. The complementarity-determining-2 stretch occupies residues 73–81 (TYYRSKWYN). The framework-3 stretch occupies residues 82–119 (DYAVSVKSRITINPDTSKNQFSLQLNSVTPEDTAVYYC). Positions 120–121 (AR) are complementarity-determining-3.

As to quaternary structure, immunoglobulins are composed of two identical heavy chains and two identical light chains; disulfide-linked.

The protein resides in the secreted. It localises to the cell membrane. V region of the variable domain of immunoglobulin heavy chains that participates in the antigen recognition. Immunoglobulins, also known as antibodies, are membrane-bound or secreted glycoproteins produced by B lymphocytes. In the recognition phase of humoral immunity, the membrane-bound immunoglobulins serve as receptors which, upon binding of a specific antigen, trigger the clonal expansion and differentiation of B lymphocytes into immunoglobulins-secreting plasma cells. Secreted immunoglobulins mediate the effector phase of humoral immunity, which results in the elimination of bound antigens. The antigen binding site is formed by the variable domain of one heavy chain, together with that of its associated light chain. Thus, each immunoglobulin has two antigen binding sites with remarkable affinity for a particular antigen. The variable domains are assembled by a process called V-(D)-J rearrangement and can then be subjected to somatic hypermutations which, after exposure to antigen and selection, allow affinity maturation for a particular antigen. The chain is Immunoglobulin heavy variable 6-1 from Homo sapiens (Human).